The chain runs to 319 residues: 4-hydroxy-3-methylbut-2-enyl diphosphate reductase (319 aa).

C12 contacts [4Fe-4S] cluster. H41 and H74 together coordinate (2E)-4-hydroxy-3-methylbut-2-enyl diphosphate. Dimethylallyl diphosphate is bound by residues H41 and H74. Isopentenyl diphosphate contacts are provided by H41 and H74. C96 serves as a coordination point for [4Fe-4S] cluster. H124 contributes to the (2E)-4-hydroxy-3-methylbut-2-enyl diphosphate binding site. H124 is a dimethylallyl diphosphate binding site. Residue H124 participates in isopentenyl diphosphate binding. The active-site Proton donor is E126. T167 serves as a coordination point for (2E)-4-hydroxy-3-methylbut-2-enyl diphosphate. Residue C197 coordinates [4Fe-4S] cluster. 4 residues coordinate (2E)-4-hydroxy-3-methylbut-2-enyl diphosphate: S225, S226, N227, and S269. Dimethylallyl diphosphate-binding residues include S225, S226, N227, and S269. S225, S226, N227, and S269 together coordinate isopentenyl diphosphate.

It belongs to the IspH family. Homodimer. [4Fe-4S] cluster serves as cofactor.

It carries out the reaction isopentenyl diphosphate + 2 oxidized [2Fe-2S]-[ferredoxin] + H2O = (2E)-4-hydroxy-3-methylbut-2-enyl diphosphate + 2 reduced [2Fe-2S]-[ferredoxin] + 2 H(+). It catalyses the reaction dimethylallyl diphosphate + 2 oxidized [2Fe-2S]-[ferredoxin] + H2O = (2E)-4-hydroxy-3-methylbut-2-enyl diphosphate + 2 reduced [2Fe-2S]-[ferredoxin] + 2 H(+). The protein operates within isoprenoid biosynthesis; dimethylallyl diphosphate biosynthesis; dimethylallyl diphosphate from (2E)-4-hydroxy-3-methylbutenyl diphosphate: step 1/1. Its pathway is isoprenoid biosynthesis; isopentenyl diphosphate biosynthesis via DXP pathway; isopentenyl diphosphate from 1-deoxy-D-xylulose 5-phosphate: step 6/6. Functionally, catalyzes the conversion of 1-hydroxy-2-methyl-2-(E)-butenyl 4-diphosphate (HMBPP) into a mixture of isopentenyl diphosphate (IPP) and dimethylallyl diphosphate (DMAPP). Acts in the terminal step of the DOXP/MEP pathway for isoprenoid precursor biosynthesis. The protein is 4-hydroxy-3-methylbut-2-enyl diphosphate reductase of Buchnera aphidicola subsp. Acyrthosiphon pisum (strain Tuc7).